Reading from the N-terminus, the 264-residue chain is Thymidylate synthase (264 aa).

Arg-21 provides a ligand contact to dUMP. His-51 lines the (6R)-5,10-methylene-5,6,7,8-tetrahydrofolate pocket. A dUMP-binding site is contributed by Arg-126–Arg-127. Residue Cys-146 is the Nucleophile of the active site. DUMP-binding positions include Arg-166–Asp-169, Asn-177, and His-207–Tyr-209. Asp-169 is a binding site for (6R)-5,10-methylene-5,6,7,8-tetrahydrofolate. Ala-263 provides a ligand contact to (6R)-5,10-methylene-5,6,7,8-tetrahydrofolate.

It belongs to the thymidylate synthase family. Bacterial-type ThyA subfamily. In terms of assembly, homodimer.

The protein localises to the cytoplasm. The catalysed reaction is dUMP + (6R)-5,10-methylene-5,6,7,8-tetrahydrofolate = 7,8-dihydrofolate + dTMP. It functions in the pathway pyrimidine metabolism; dTTP biosynthesis. Catalyzes the reductive methylation of 2'-deoxyuridine-5'-monophosphate (dUMP) to 2'-deoxythymidine-5'-monophosphate (dTMP) while utilizing 5,10-methylenetetrahydrofolate (mTHF) as the methyl donor and reductant in the reaction, yielding dihydrofolate (DHF) as a by-product. This enzymatic reaction provides an intracellular de novo source of dTMP, an essential precursor for DNA biosynthesis. The protein is Thymidylate synthase of Nitrosomonas europaea (strain ATCC 19718 / CIP 103999 / KCTC 2705 / NBRC 14298).